The sequence spans 243 residues: MAELLLGVNIDHIATLRNARGTAYPDPVQAAFIAEQAGADGITVHLREDRRHITDRDVCILRQTLDTRMNLEMAVTEEMLAIAVETKPHFCCLVPEKRQEVTTEGGLDVAGQREKMRDACKRLADAGIQVSLFIDADEDQIKAAAEVGAPFIEIHTGCYADAKTDAEQAQELARIAKAATFATSLGLKVNAGHGLTYHNVKAIAAIPEMHELNIGHAIIGRAVMTGLKDAVAEMKRLMLEARG.

Asn9 contributes to the 3-amino-2-oxopropyl phosphate binding site. A 1-deoxy-D-xylulose 5-phosphate-binding site is contributed by 11-12 (DH). Residue Arg20 participates in 3-amino-2-oxopropyl phosphate binding. His45 serves as the catalytic Proton acceptor. 1-deoxy-D-xylulose 5-phosphate-binding residues include Arg47 and His52. The Proton acceptor role is filled by Glu72. Residue Thr102 coordinates 1-deoxy-D-xylulose 5-phosphate. The active-site Proton donor is the His193. 3-amino-2-oxopropyl phosphate is bound by residues Gly194 and 215–216 (GH).

This sequence belongs to the PNP synthase family. In terms of assembly, homooctamer; tetramer of dimers.

Its subcellular location is the cytoplasm. It catalyses the reaction 3-amino-2-oxopropyl phosphate + 1-deoxy-D-xylulose 5-phosphate = pyridoxine 5'-phosphate + phosphate + 2 H2O + H(+). It participates in cofactor biosynthesis; pyridoxine 5'-phosphate biosynthesis; pyridoxine 5'-phosphate from D-erythrose 4-phosphate: step 5/5. Its function is as follows. Catalyzes the complicated ring closure reaction between the two acyclic compounds 1-deoxy-D-xylulose-5-phosphate (DXP) and 3-amino-2-oxopropyl phosphate (1-amino-acetone-3-phosphate or AAP) to form pyridoxine 5'-phosphate (PNP) and inorganic phosphate. The protein is Pyridoxine 5'-phosphate synthase of Escherichia coli O6:H1 (strain CFT073 / ATCC 700928 / UPEC).